The following is a 309-amino-acid chain: Taste receptor type 2 member 8 (309 aa).

The Extracellular segment spans residues 1 to 7 (MFSPADN). The chain crosses the membrane as a helical span at residues 8-28 (IFIILITGEFIIGILGNGYIG). At 29–50 (LVNWIDWIKKKKISTIDCILTN) the chain is on the cytoplasmic side. Residues 51–71 (LVISRICLISVMVVNGIVIVL) traverse the membrane as a helical segment. Topologically, residues 72-82 (YPDVYTKTKLQ) are extracellular. Residues 83 to 103 (IVICTFWTFANYLNMWFTACL) traverse the membrane as a helical segment. The Cytoplasmic portion of the chain corresponds to 104–131 (NVFYSLKVANSSHPLFLWLKRKIDMVVR). Residues 132–152 (WILLGCFAISLLVSLIIATVL) form a helical membrane-spanning segment. Residues 153 to 184 (SHDYRFHAIAKHKRNVTEMFHVSKMPYFEPLT) are Extracellular-facing. N-linked (GlcNAc...) asparagine glycosylation occurs at Asn167. The chain crosses the membrane as a helical span at residues 185-205 (LFNLLAIVPFIVSLMSFFLLV). Residues 206–239 (RSLWRHTKQIKLYATGGRDPSTEAHVRAIKTMTL) are Cytoplasmic-facing. A helical transmembrane segment spans residues 240-260 (LIFFFFLYYITSLLVXFSYLI). The Extracellular portion of the chain corresponds to 261 to 266 (TNYKLA). A helical transmembrane segment spans residues 267–287 (MAFGEIVAILYPSGHSLILII). Residues 288-309 (LNNKLRQASVRMLTCRKIACVT) lie on the Cytoplasmic side of the membrane.

This sequence belongs to the G-protein coupled receptor T2R family.

It localises to the membrane. Its function is as follows. Receptor that may play a role in the perception of bitterness and is gustducin-linked. May play a role in sensing the chemical composition of the gastrointestinal content. The activity of this receptor may stimulate alpha gustducin, mediate PLC-beta-2 activation and lead to the gating of TRPM5. The chain is Taste receptor type 2 member 8 (TAS2R8) from Papio hamadryas (Hamadryas baboon).